Here is a 217-residue protein sequence, read N- to C-terminus: Flagellar L-ring protein 1 (217 aa).

A signal peptide spans Met-1–Ala-16. Cys-17 carries the N-palmitoyl cysteine lipid modification. The S-diacylglycerol cysteine moiety is linked to residue Cys-17.

Belongs to the FlgH family. As to quaternary structure, the basal body constitutes a major portion of the flagellar organelle and consists of four rings (L,P,S, and M) mounted on a central rod.

The protein localises to the cell outer membrane. The protein resides in the bacterial flagellum basal body. Functionally, assembles around the rod to form the L-ring and probably protects the motor/basal body from shearing forces during rotation. This Chromobacterium violaceum (strain ATCC 12472 / DSM 30191 / JCM 1249 / CCUG 213 / NBRC 12614 / NCIMB 9131 / NCTC 9757 / MK) protein is Flagellar L-ring protein 1.